Reading from the N-terminus, the 525-residue chain is Peptide chain release factor 3 (525 aa).

The tr-type G domain occupies 11–279 (NNRRTFAIIS…AYLKYAPKPA (269 aa)). GTP contacts are provided by residues 20-27 (SHPDAGKT), 88-92 (DTPGH), and 142-145 (NKLD).

The protein belongs to the TRAFAC class translation factor GTPase superfamily. Classic translation factor GTPase family. PrfC subfamily.

It is found in the cytoplasm. Increases the formation of ribosomal termination complexes and stimulates activities of RF-1 and RF-2. It binds guanine nucleotides and has strong preference for UGA stop codons. It may interact directly with the ribosome. The stimulation of RF-1 and RF-2 is significantly reduced by GTP and GDP, but not by GMP. The sequence is that of Peptide chain release factor 3 from Ligilactobacillus salivarius (strain UCC118) (Lactobacillus salivarius).